A 529-amino-acid polypeptide reads, in one-letter code: Peptide chain release factor 3 (529 aa).

Residues 11-280 (ATRRTFAIIS…GLVQWAPPPQ (270 aa)) enclose the tr-type G domain. Residues 20-27 (SHPDAGKT), 88-92 (DTPGH), and 142-145 (NKLD) contribute to the GTP site.

Belongs to the TRAFAC class translation factor GTPase superfamily. Classic translation factor GTPase family. PrfC subfamily.

The protein localises to the cytoplasm. Increases the formation of ribosomal termination complexes and stimulates activities of RF-1 and RF-2. It binds guanine nucleotides and has strong preference for UGA stop codons. It may interact directly with the ribosome. The stimulation of RF-1 and RF-2 is significantly reduced by GTP and GDP, but not by GMP. The polypeptide is Peptide chain release factor 3 (Alcanivorax borkumensis (strain ATCC 700651 / DSM 11573 / NCIMB 13689 / SK2)).